Consider the following 505-residue polypeptide: uncharacterized protein (505 aa).

A disordered region spans residues 461 to 480 (RTDVHPGNSDDEGAYSSADS).

It to M.jannaschii MJ0787.

This is an uncharacterized protein from Methanothermobacter thermautotrophicus (strain ATCC 29096 / DSM 1053 / JCM 10044 / NBRC 100330 / Delta H) (Methanobacterium thermoautotrophicum).